Here is a 474-residue protein sequence, read N- to C-terminus: Probable fucosyltransferase 9 (474 aa).

A helical; Signal-anchor for type II membrane protein transmembrane segment spans residues Met1–Pro21. Topologically, residues Ser22–Leu474 are lumenal. N-linked (GlcNAc...) asparagine glycans are attached at residues Asn24, Asn39, and Asn208.

It belongs to the glycosyltransferase 37 family. Expressed in leaves and stems.

It localises to the golgi apparatus. The protein resides in the golgi stack membrane. Its pathway is protein modification; protein glycosylation. In terms of biological role, may be involved in cell wall biosynthesis. May act as a fucosyltransferase. The polypeptide is Probable fucosyltransferase 9 (FUT9) (Arabidopsis thaliana (Mouse-ear cress)).